The chain runs to 1106 residues: GYF domain-containing protein gyf-1 (1106 aa).

Over residues 1 to 17 the composition is skewed to polar residues; sequence MSSVSSAEPTAQQNFNP. 3 disordered regions span residues 1–50, 160–370, and 383–434; these read MSSV…GGFD, GALQ…DSTV, and KAST…SAWS. Positions 30 to 42 are enriched in low complexity; sequence RGGSISSGNNRSS. Positions 162-180 are enriched in polar residues; the sequence is LQNGQSPTSRWAPKSSWNK. Positions 207–224 are enriched in gly residues; it reads GRGGGRIGGENGFGGATN. Polar residues predominate over residues 229–243; the sequence is AAQNEDSPGTYQSKF. Positions 248–261 are enriched in gly residues; sequence RGGGAGSVGRGGST. Over residues 306-322 the composition is skewed to polar residues; it reads VGSTSRTSTNAAPQSSE. Low complexity-rich tracts occupy residues 334–353 and 390–410; these read QRTQ…QQAQ and PPQQ…APSR. Residues 459 to 508 enclose the GYF domain; sequence PVQFYYMDPTETRRGPFPKDQMNVWFKAGYFTDESLRVQRGENGEYKTIG. Residues 584 to 746 are a coiled coil; it reads LDDHNRRLAE…ERKRAAERER (163 aa). Disordered stretches follow at residues 778–811, 909–928, 1026–1076, and 1087–1106; these read AFTG…KTAP, KNSQ…SAKV, AGGR…DGNI, and RLNK…PSRR. The segment covering 786 to 801 has biased composition (polar residues); sequence VSPSGSEESDEWISTS. Over residues 1046–1057 the composition is skewed to low complexity; it reads SDSNSGSNSNSG.

The sequence is that of GYF domain-containing protein gyf-1 from Caenorhabditis elegans.